A 278-amino-acid polypeptide reads, in one-letter code: UPF0750 membrane protein YxkD (278 aa).

The next 5 helical transmembrane spans lie at 8-28 (VLML…FAIP), 46-66 (LFQW…LLIG), 77-97 (YTII…GWSI), 101-121 (ELII…GMII), and 145-165 (ISYA…FIIG).

It belongs to the UPF0750 family.

It is found in the cell membrane. The sequence is that of UPF0750 membrane protein YxkD (yxkD) from Bacillus subtilis (strain 168).